The following is a 353-amino-acid chain: Rhodopsin (353 aa).

Residues 1–36 (MNGTEGPFFYVPMLNTTGIVRSPYDYPQYYLVNPAA) lie on the Extracellular side of the membrane. N-linked (GlcNAc...) asparagine glycans are attached at residues Asn2 and Asn15. The chain crosses the membrane as a helical span at residues 37-61 (YAALGAYMFLLILLGFPINFLTLYV). Residues 62-73 (TIEHKKLRTPLN) lie on the Cytoplasmic side of the membrane. Residues 74-96 (YILLNLAVANLFMVFGGFTTTMY) traverse the membrane as a helical segment. The Extracellular portion of the chain corresponds to 97-110 (TSMHGYFVLGRLGC). A disulfide bridge connects residues Cys110 and Cys187. A helical transmembrane segment spans residues 111 to 133 (NLEGFFATLGGEIGLWSLVVLAI). Positions 134–136 (ERW) match the 'Ionic lock' involved in activated form stabilization motif. At 134 to 152 (ERWMVVCKPISNFRFGENH) the chain is on the cytoplasmic side. Residues 153-173 (AIMGLAFTWIMACACAVPPLV) traverse the membrane as a helical segment. Over 174-202 (GWSRYIPEGMQCSCGVDYYTRAEGFNNES) the chain is Extracellular. Asn200 is a glycosylation site (N-linked (GlcNAc...) asparagine). Residues 203–224 (FVVYMFICHFLIPMAVVFFCYG) traverse the membrane as a helical segment. The Cytoplasmic portion of the chain corresponds to 225–252 (RLLCAVKEAAAAQQESETTQRAEREVTR). A helical membrane pass occupies residues 253 to 274 (MVVIMVVAFLICWLPYAGVAWW). Residues 275 to 286 (IFTHQGSEFGPV) lie on the Extracellular side of the membrane. Residues 287–308 (FMTIPAFFAKSSSIYNPLIYIC) traverse the membrane as a helical segment. Lys296 carries the post-translational modification N6-(retinylidene)lysine. The Cytoplasmic segment spans residues 309–353 (MNKQFRHCMITTLCCGKNPFEEEEGASTTSKTEASSVSSSSVSPA). S-palmitoyl cysteine attachment occurs at residues Cys322 and Cys323. Residues 330 to 353 (EEEGASTTSKTEASSVSSSSVSPA) form a disordered region. A compositionally biased stretch (low complexity) spans 334 to 353 (ASTTSKTEASSVSSSSVSPA).

It belongs to the G-protein coupled receptor 1 family. Opsin subfamily. Phosphorylated on some or all of the serine and threonine residues present in the C-terminal region. In terms of processing, contains one covalently linked retinal chromophore.

The protein resides in the membrane. The protein localises to the cell projection. It is found in the cilium. Its subcellular location is the photoreceptor outer segment. Its function is as follows. Photoreceptor required for image-forming vision at low light intensity. While most salt water fish species use retinal as chromophore, most freshwater fish use 3-dehydroretinal, or a mixture of retinal and 3-dehydroretinal. Light-induced isomerization of 11-cis to all-trans retinal triggers a conformational change that activates signaling via G-proteins. Subsequent receptor phosphorylation mediates displacement of the bound G-protein alpha subunit by arrestin and terminates signaling. This chain is Rhodopsin (rho), found in Tetraodon nigroviridis (Spotted green pufferfish).